Consider the following 417-residue polypeptide: Tyrosine--tRNA ligase (417 aa).

Tyr-39 is an L-tyrosine binding site. Positions 44–53 match the 'HIGH' region motif; it reads PTAPSLHAGG. Residues Tyr-176 and Gln-180 each coordinate L-tyrosine. Residues 236-240 carry the 'KMSKS' region motif; it reads KMGKS. Lys-239 lines the ATP pocket. The S4 RNA-binding domain maps to 350-417; it reads IGVLALMVLA…KKRHVLIRPA (68 aa).

Belongs to the class-I aminoacyl-tRNA synthetase family. TyrS type 1 subfamily. As to quaternary structure, homodimer.

It is found in the cytoplasm. It catalyses the reaction tRNA(Tyr) + L-tyrosine + ATP = L-tyrosyl-tRNA(Tyr) + AMP + diphosphate + H(+). Its function is as follows. Catalyzes the attachment of tyrosine to tRNA(Tyr) in a two-step reaction: tyrosine is first activated by ATP to form Tyr-AMP and then transferred to the acceptor end of tRNA(Tyr). In Brucella abortus (strain 2308), this protein is Tyrosine--tRNA ligase.